The following is a 715-amino-acid chain: ATP-dependent DNA helicase Hel308 (715 aa).

A Q motif motif is present at residues 8–36; the sequence is MPIEDLKLPSNVIEIIKKRGIKKLNPPQT. ATP is bound by residues Gln35 and 53-60; that span reads SPTGSGKT. A Helicase ATP-binding domain is found at 40–203; the sequence is KKGLLEGNRL…WLGAEPVATN (164 aa). A DEAH box motif is present at residues 152–155; the sequence is DELH. Residues 236-442 form the Helicase C-terminal domain; sequence HGDDAIIAYT…ERAFYTFLLG (207 aa).

Belongs to the helicase family. Hel308 subfamily. As to quaternary structure, monomer.

It carries out the reaction Couples ATP hydrolysis with the unwinding of duplex DNA by translocating in the 3'-5' direction.. It catalyses the reaction ATP + H2O = ADP + phosphate + H(+). In terms of biological role, DNA-dependent ATPase and 3'-5' DNA helicase that may be involved in repair of stalled replication forks. A low processivity 3'-5' helicase. Unwinds short dsDNA substrates with 3'-overhangs (25 bp dsDNA with 25 base overhang), less active on longer dsDNA substrates. Also unwinds the lagging strand of a stalled replication fork (but the leading strand was not tested). Binds ssDNA, but dsDNA about 35-fold less well. Able to displace streptavidin from biotinylated ssDNA, which is partially inhibited by DNA-binding proteins, suggesting it may play a role in stripping proteins from stalled replication forks. The sequence is that of ATP-dependent DNA helicase Hel308 from Saccharolobus solfataricus (strain 98/2) (Sulfolobus solfataricus).